Reading from the N-terminus, the 175-residue chain is FMRFamide-like neuropeptides 1 (175 aa).

Positions 1-21 are cleaved as a signal peptide; sequence MTLLYQVGLLLLVAATYKVSA. Residues 22 to 68 constitute a propeptide that is removed on maturation; the sequence is ECCTPGATSDFCTVFSMLSTMEQNEVMNFIGENCDGDAEVALQKMEK. At Tyr-76 the chain carries Tyrosine amide. A propeptide spanning residues 79–86 is cleaved from the precursor; that stretch reads SAAVKSLG. A phenylalanine amide mark is found at Phe-98, Phe-108, Phe-120, Phe-130, Phe-142, and Phe-154. Positions 157 to 165 are excised as a propeptide; the sequence is SFDNFDRES. Position 173 is a phenylalanine amide (Phe-173).

This sequence belongs to the FARP (FMRFamide related peptide) family. May be processed by convertase egl-3. As to expression, each flp gene is expressed in a distinct set of neurons. Flp-1 is expressed in the AVA interneurons, the M5 cholinergic pharyngeal motoneurons, and the AIA, AIY, AVE, AVK, RIG and RMG neurons.

It localises to the secreted. Together with flp-18, plays a homeostatic role by acting on the GABAergic neural transmission at neuromuscular junctions to prevent overexcitation of the locomotor circuit. In terms of biological role, inhibits the activity of dissected pharyngeal myogenic muscle system. Functionally, DPNFLRF-amide: Inhibits the activity of dissected pharyngeal myogenic muscle system. Its function is as follows. Acts as a ligand for the npr-22 receptor in vitro. The chain is FMRFamide-like neuropeptides 1 (flp-1) from Caenorhabditis elegans.